Here is a 415-residue protein sequence, read N- to C-terminus: uncharacterized protein (415 aa).

Histidine 88 lines the Zn(2+) pocket. Aspartate 90 is a catalytic residue. Aspartate 121 contacts Zn(2+). Glutamate 155 serves as the catalytic Proton acceptor. 3 residues coordinate Zn(2+): glutamate 156, aspartate 185, and histidine 392.

Belongs to the peptidase M20A family. The cofactor is Zn(2+). It depends on Co(2+) as a cofactor.

This is an uncharacterized protein from Methanococcus maripaludis (strain DSM 14266 / JCM 13030 / NBRC 101832 / S2 / LL).